The following is a 403-amino-acid chain: Na(+)-translocating NADH-quinone reductase subunit B (403 aa).

Helical transmembrane passes span Met56–Gly76, Ala121–Phe141, Ile163–Ile183, Trp220–Ile240, Thr265–Trp285, Ile287–Ser307, Met312–Phe332, Trp348–Phe368, and Gly371–Val391. Thr230 is modified (FMN phosphoryl threonine).

It belongs to the NqrB/RnfD family. Composed of six subunits; NqrA, NqrB, NqrC, NqrD, NqrE and NqrF. FMN serves as cofactor.

It localises to the cell inner membrane. It carries out the reaction a ubiquinone + n Na(+)(in) + NADH + H(+) = a ubiquinol + n Na(+)(out) + NAD(+). Its function is as follows. NQR complex catalyzes the reduction of ubiquinone-1 to ubiquinol by two successive reactions, coupled with the transport of Na(+) ions from the cytoplasm to the periplasm. NqrA to NqrE are probably involved in the second step, the conversion of ubisemiquinone to ubiquinol. This is Na(+)-translocating NADH-quinone reductase subunit B from Ectopseudomonas mendocina (strain ymp) (Pseudomonas mendocina).